The chain runs to 189 residues: MHFYRTNEFRVGLKIMLNGEPYAIIENEFVKPGKGQPFNRVRLRQLLSGKKIIEKIFKSGDAVEAADIIDRHLNYLYNNGEFWYFINNQNYELVAADAKAVGDYAKWLVKQTPCVLTLWKDQPIAVVPPNFVELEVLSTDPGIKGDAISSIYKPATLTTGVIVKVPLFINKGEIIKVDTRTSMYISRVK.

Lys-34 carries the post-translational modification N6-(3,6-diaminohexanoyl)-5-hydroxylysine.

It belongs to the elongation factor P family. May be beta-lysylated on the epsilon-amino group of Lys-34 by the combined action of EpmA and EpmB, and then hydroxylated on the C5 position of the same residue by EpmC (if this protein is present). Lysylation is critical for the stimulatory effect of EF-P on peptide-bond formation. The lysylation moiety may extend toward the peptidyltransferase center and stabilize the terminal 3-CCA end of the tRNA. Hydroxylation of the C5 position on Lys-34 may allow additional potential stabilizing hydrogen-bond interactions with the P-tRNA.

Its subcellular location is the cytoplasm. Its pathway is protein biosynthesis; polypeptide chain elongation. Its function is as follows. Involved in peptide bond synthesis. Alleviates ribosome stalling that occurs when 3 or more consecutive Pro residues or the sequence PPG is present in a protein, possibly by augmenting the peptidyl transferase activity of the ribosome. Modification of Lys-34 is required for alleviation. The polypeptide is Elongation factor P (Baumannia cicadellinicola subsp. Homalodisca coagulata).